Consider the following 389-residue polypeptide: Large envelope protein (389 aa).

At Met-1 the chain carries N-acetylmethionine. Gly-2 carries the N-myristoyl glycine; by host lipid modification. The interval 2–108 (GQNLSTSNPL…PPLRDAHPQA (107 aa)) is pre-S1. Residues 2–163 (GQNLSTSNPL…FSKIGDLAPN (162 aa)) form a pre-S region. Over 2–170 (GQNLSTSNPL…APNMENITSG (169 aa)) the chain is Virion surface; in external conformation. Over 2–242 (GQNLSTSNPL…PGYRWMCLRR (241 aa)) the chain is Intravirion; in internal conformation. The segment at 76–103 (TLPANPPPAATNRQSGRQPTPLSPPLRD) is disordered. The span at 86–95 (TNRQSGRQPT) shows a compositional bias: polar residues. The pre-S2 stretch occupies residues 109–163 (MQWTSTTFHQALQDPRVRGLYFPAGGSSSGTVNPVPTTASPILSIFSKIGDLAPN). Residues 171 to 191 (FLGPLLVLQAGFFLLTRILTI) traverse the membrane as a helical segment. Residues 192–242 (PQSLDSWWTSLNFLGGTTVCLGQNSQSPTSNHSPTSCPPTCPGYRWMCLRR) lie on the Intravirion; in external conformation side of the membrane. The helical transmembrane segment at 243 to 263 (FIIFLFILLLCLIFLLVLLDY) threads the bilayer. Residues 264-337 (QGMLPVCPLI…WASARFSWLS (74 aa)) are Virion surface-facing. A glycan (N-linked (GlcNAc...) asparagine; by host) is linked at Asn-309. A helical membrane pass occupies residues 338-358 (LLVPFVQWFAGLSPIVWLSVI). Residues 359–364 (WMMWYW) are Intravirion-facing. A helical transmembrane segment spans residues 365–387 (GPSLYSILSPFLPLLPIFFCLWA). Topologically, residues 388-389 (YI) are virion surface.

This sequence belongs to the orthohepadnavirus major surface antigen family. In its internal form (Li-HBsAg), interacts with the capsid protein and with the isoform S. Interacts with host chaperone CANX. In terms of assembly, associates with host chaperone CANX through its pre-S2 N glycan; this association may be essential for isoform M proper secretion. As to quaternary structure, interacts with isoform L. Interacts with the antigens of satellite virus HDV (HDVAgs); this interaction is required for encapsidation of HDV genomic RNA. Post-translationally, isoform M is N-terminally acetylated by host at a ratio of 90%, and N-glycosylated by host at the pre-S2 region. Myristoylated.

It localises to the virion membrane. The large envelope protein exists in two topological conformations, one which is termed 'external' or Le-HBsAg and the other 'internal' or Li-HBsAg. In its external conformation the protein attaches the virus to cell receptors and thereby initiating infection. This interaction determines the species specificity and liver tropism. This attachment induces virion internalization predominantly through caveolin-mediated endocytosis. The large envelope protein also assures fusion between virion membrane and endosomal membrane. In its internal conformation the protein plays a role in virion morphogenesis and mediates the contact with the nucleocapsid like a matrix protein. Its function is as follows. The middle envelope protein plays an important role in the budding of the virion. It is involved in the induction of budding in a nucleocapsid independent way. In this process the majority of envelope proteins bud to form subviral lipoprotein particles of 22 nm of diameter that do not contain a nucleocapsid. This chain is Large envelope protein, found in Homo sapiens (Human).